We begin with the raw amino-acid sequence, 278 residues long: 3-methyl-2-oxobutanoate hydroxymethyltransferase (278 aa).

Mg(2+) contacts are provided by Asp44 and Asp83. Residues 44 to 45 (DS), Asp83, and Lys112 contribute to the 3-methyl-2-oxobutanoate site. Glu114 is a binding site for Mg(2+). Glu181 (proton acceptor) is an active-site residue.

It belongs to the PanB family. In terms of assembly, homodecamer; pentamer of dimers. The cofactor is Mg(2+).

Its subcellular location is the cytoplasm. The enzyme catalyses 3-methyl-2-oxobutanoate + (6R)-5,10-methylene-5,6,7,8-tetrahydrofolate + H2O = 2-dehydropantoate + (6S)-5,6,7,8-tetrahydrofolate. Its pathway is cofactor biosynthesis; (R)-pantothenate biosynthesis; (R)-pantoate from 3-methyl-2-oxobutanoate: step 1/2. Its function is as follows. Catalyzes the reversible reaction in which hydroxymethyl group from 5,10-methylenetetrahydrofolate is transferred onto alpha-ketoisovalerate to form ketopantoate. The sequence is that of 3-methyl-2-oxobutanoate hydroxymethyltransferase from Roseiflexus sp. (strain RS-1).